A 310-amino-acid polypeptide reads, in one-letter code: p-hydroxybenzoic acid efflux pump subunit AaeA (310 aa).

A helical membrane pass occupies residues 12 to 32; sequence AITVVLVILAFIAIFNAWVYY.

This sequence belongs to the membrane fusion protein (MFP) (TC 8.A.1) family.

The protein resides in the cell inner membrane. In terms of biological role, forms an efflux pump with AaeB. This is p-hydroxybenzoic acid efflux pump subunit AaeA from Escherichia coli O127:H6 (strain E2348/69 / EPEC).